A 484-amino-acid polypeptide reads, in one-letter code: Allantoinase, mitochondrial (484 aa).

Zn(2+)-binding residues include His-76, His-78, Lys-163, His-199, His-251, and Asp-324. Lys-163 is modified (N6-carboxylysine).

Belongs to the metallo-dependent hydrolases superfamily. Allantoinase family. As to quaternary structure, homotetramer. Requires Zn(2+) as cofactor. Post-translationally, carboxylation allows a single lysine to coordinate two zinc ions. As to expression, liver and kidney.

The protein resides in the mitochondrion. It catalyses the reaction (S)-allantoin + H2O = allantoate + H(+). Its pathway is nitrogen metabolism; (S)-allantoin degradation; allantoate from (S)-allantoin: step 1/1. This is Allantoinase, mitochondrial (ALN) from Aquarana catesbeiana (American bullfrog).